The primary structure comprises 372 residues: 3-dehydroquinate synthase (372 aa).

NAD(+) contacts are provided by residues 116-120 (GVVGD), 140-141 (TT), lysine 153, lysine 162, and 180-183 (TLKT). Glutamate 195, histidine 260, and histidine 277 together coordinate Zn(2+).

The protein belongs to the sugar phosphate cyclases superfamily. Dehydroquinate synthase family. NAD(+) serves as cofactor. It depends on Co(2+) as a cofactor. Requires Zn(2+) as cofactor.

The protein resides in the cytoplasm. It carries out the reaction 7-phospho-2-dehydro-3-deoxy-D-arabino-heptonate = 3-dehydroquinate + phosphate. It functions in the pathway metabolic intermediate biosynthesis; chorismate biosynthesis; chorismate from D-erythrose 4-phosphate and phosphoenolpyruvate: step 2/7. Functionally, catalyzes the conversion of 3-deoxy-D-arabino-heptulosonate 7-phosphate (DAHP) to dehydroquinate (DHQ). This Prochlorococcus marinus (strain MIT 9313) protein is 3-dehydroquinate synthase.